The sequence spans 75 residues: Translational regulator CsrA (75 aa).

The protein belongs to the CsrA/RsmA family. Homodimer; the beta-strands of each monomer intercalate to form a hydrophobic core, while the alpha-helices form wings that extend away from the core.

The protein resides in the cytoplasm. In terms of biological role, a translational regulator that binds mRNA to regulate translation initiation and/or mRNA stability. Usually binds in the 5'-UTR at or near the Shine-Dalgarno sequence preventing ribosome-binding, thus repressing translation. Its main target seems to be the major flagellin gene, while its function is anatagonized by FliW. This is Translational regulator CsrA from Exiguobacterium sibiricum (strain DSM 17290 / CCUG 55495 / CIP 109462 / JCM 13490 / 255-15).